A 625-amino-acid polypeptide reads, in one-letter code: Interferon-induced GTP-binding protein MxE (625 aa).

Positions D40–P313 constitute a Dynamin-type G domain. The G1 motif stretch occupies residues G50–S57. Position 50–57 (G50–S57) interacts with GTP. A G2 motif region spans residues V75–R77. Positions D151 to G154 are G3 motif. GTP is bound by residues D151–I155 and T220–D223. Residues T220–D223 are G4 motif. The tract at residues K252 to G255 is G5 motif. A GED domain is found at V536–A625.

The protein belongs to the TRAFAC class dynamin-like GTPase superfamily. Dynamin/Fzo/YdjA family.

It is found in the cytoplasm. This Danio rerio (Zebrafish) protein is Interferon-induced GTP-binding protein MxE (mxe).